The chain runs to 291 residues: Phycobilisome 32.1 kDa linker polypeptide, phycocyanin-associated, rod 1 (291 aa).

Positions 2–179 constitute a PBS-linker domain; the sequence is AITTAASRLG…LYRGYANSDR (178 aa). The CpcD-like domain occupies 236–288; that stretch reads SKLFRVEITAISAPGYPKVRRSNKAVIVPFEQLNQTLQQINRLGGKVASITPA.

This sequence belongs to the phycobilisome linker protein family. In terms of assembly, part of 2 PBS rod complexes, the conventional CpcG-PBS rod and a photosystem I-specific CpcL-PBS rod, both of which include ferredoxin--NADP reductase (petH). CpcG-PBS has on average 3 stacked phycocyanin hexamers (PC, CpcA and CpcB). Linker CpcG connects the PC stack to the thylakoid, the hexamers are linked by 1 copy of CpcC1, 1 copy of CpcC2 and the stack is terminated by a single copy of CpcD. The CpcL-PBS has on average 5 stacked phycocyanin hexamers (PC, CpcA and CpcB). Linker CpcL connects the PC stack to the thylakoid, the hexamers are linked by 1 copy of CpcC1, 3 copies of CpcC2 and the stack is terminated by a single copy of CpcD.

Its subcellular location is the cellular thylakoid membrane. In terms of biological role, rod linker protein, connecting hexameric phycocyanin (PC, made by cpcA and cpcB) rods in the phycobilisome (PBS). PC is the major phycobiliprotein in PBS rods. Linker polypeptides determine the state of aggregation and the location of the disk-shaped phycobiliprotein units within the phycobilisome and modulate their spectroscopic properties in order to mediate a directed and optimal energy transfer. The protein is Phycobilisome 32.1 kDa linker polypeptide, phycocyanin-associated, rod 1 (cpcC1) of Synechocystis sp. (strain ATCC 27184 / PCC 6803 / Kazusa).